Reading from the N-terminus, the 42-residue chain is Photosystem II reaction center protein J (42 aa).

A helical transmembrane segment spans residues 10-30; the sequence is IPLWFIGVIAGIAALSIVGLF.

It belongs to the PsbJ family. PSII is composed of 1 copy each of membrane proteins PsbA, PsbB, PsbC, PsbD, PsbE, PsbF, PsbH, PsbI, PsbJ, PsbK, PsbL, PsbM, PsbT, PsbX, PsbY, PsbZ, Psb30/Ycf12, at least 3 peripheral proteins of the oxygen-evolving complex and a large number of cofactors. It forms dimeric complexes.

The protein localises to the plastid. Its subcellular location is the chloroplast thylakoid membrane. One of the components of the core complex of photosystem II (PSII). PSII is a light-driven water:plastoquinone oxidoreductase that uses light energy to abstract electrons from H(2)O, generating O(2) and a proton gradient subsequently used for ATP formation. It consists of a core antenna complex that captures photons, and an electron transfer chain that converts photonic excitation into a charge separation. The polypeptide is Photosystem II reaction center protein J (Zygnema circumcarinatum (Green alga)).